The following is a 474-amino-acid chain: E3 ubiquitin-protein ligase rnf168 (474 aa).

Residues M1–V12 are compositionally biased toward basic and acidic residues. The interval M1 to K20 is disordered. Residues C26–R65 form an RING-type zinc finger. An LR motif 1 motif is present at residues V119–V137. Residues E152 to A160 carry the UMI motif motif. The MIU motif 1 signature appears at E174 to G195. Positions L192–N203 are enriched in polar residues. 2 disordered regions span residues L192–S259 and I367–S474. Positions P233–S243 are enriched in low complexity. The MIU motif 2 motif lies at R353–S376. Residues I367–S383 are compositionally biased toward basic and acidic residues. The LR motif 2 signature appears at R379 to R390. Composition is skewed to polar residues over residues D385–P402 and K409–N418. Residues R422–L432 are compositionally biased toward basic and acidic residues. The span at V443 to K457 shows a compositional bias: low complexity.

This sequence belongs to the RNF168 family. Monomer.

It localises to the nucleus. It carries out the reaction S-ubiquitinyl-[E2 ubiquitin-conjugating enzyme]-L-cysteine + [acceptor protein]-L-lysine = [E2 ubiquitin-conjugating enzyme]-L-cysteine + N(6)-ubiquitinyl-[acceptor protein]-L-lysine.. Its pathway is protein modification; protein ubiquitination. In terms of biological role, E3 ubiquitin-protein ligase required for accumulation of repair proteins to sites of DNA damage. Acts with ube2n/ubc13 to amplify the rnf8-dependent histone ubiquitination. Recruited to sites of DNA damage at double-strand breaks (DSBs) by binding to ubiquitinated histone H2A and ubiquitinates histone H2A and H2AX, leading to amplify the rnf8-dependent H2A ubiquitination and promoting the formation of 'Lys-63'-linked ubiquitin conjugates. This leads to concentrate ubiquitinated histones H2A and H2AX at DNA lesions. Catalyzes monoubiquitination of 'Lys-13' and 'Lys-15' of nucleosomal histone H2A (H2AK13Ub and H2AK15Ub, respectively). This Danio rerio (Zebrafish) protein is E3 ubiquitin-protein ligase rnf168.